Consider the following 320-residue polypeptide: Putative thiosulfate sulfurtransferase (320 aa).

The first 37 residues, 1 to 37 (MSVRSLRWPRQKAFLAVISLVVAVLLAVPGWLTPATA), serve as a signal peptide directing secretion. Rhodanese domains are found at residues 56–166 (NNKQ…PVTK) and 194–315 (LTGK…PVET). The active-site Cysteine persulfide intermediate is the C274.

Its subcellular location is the periplasm. It carries out the reaction thiosulfate + hydrogen cyanide = thiocyanate + sulfite + 2 H(+). In terms of biological role, may be a sulfotransferase involved in the transport of sulfate. Displays very low rhodanese activity. The polypeptide is Putative thiosulfate sulfurtransferase (rhdA) (Synechococcus elongatus (strain ATCC 33912 / PCC 7942 / FACHB-805) (Anacystis nidulans R2)).